The following is a 497-amino-acid chain: 4,4'-diaponeurosporene oxygenase (497 aa).

7-19 (VIGGGLGGISAAI) is a binding site for FAD.

Belongs to the carotenoid/retinoid oxidoreductase family. CrtP subfamily. The cofactor is FAD.

It catalyses the reaction all-trans-4,4'-diaponeurosporene + 2 AH2 + 2 O2 = 4,4'-diaponeurosporenal + 2 A + 3 H2O. The protein operates within carotenoid biosynthesis; staphyloxanthin biosynthesis; staphyloxanthin from farnesyl diphosphate: step 3/5. In terms of biological role, involved in the biosynthesis of the yellow-orange carotenoid staphyloxanthin, which plays a role in the virulence via its protective function against oxidative stress. Catalyzes the oxidation of the terminal methyl side group of 4,4'-diaponeurosporene to form 4,4'-diaponeurosporen-4-al. The C40 carotenoid lycopene is a poor substrate. The protein is 4,4'-diaponeurosporene oxygenase of Staphylococcus aureus (strain Mu50 / ATCC 700699).